Here is a 251-residue protein sequence, read N- to C-terminus: Ribonuclease PH (251 aa).

Phosphate-binding positions include R90 and 128–130 (GTR).

This sequence belongs to the RNase PH family. As to quaternary structure, homohexameric ring arranged as a trimer of dimers.

The catalysed reaction is tRNA(n+1) + phosphate = tRNA(n) + a ribonucleoside 5'-diphosphate. In terms of biological role, phosphorolytic 3'-5' exoribonuclease that plays an important role in tRNA 3'-end maturation. Removes nucleotide residues following the 3'-CCA terminus of tRNAs; can also add nucleotides to the ends of RNA molecules by using nucleoside diphosphates as substrates, but this may not be physiologically important. Probably plays a role in initiation of 16S rRNA degradation (leading to ribosome degradation) during starvation. The polypeptide is Ribonuclease PH (Leifsonia xyli subsp. xyli (strain CTCB07)).